Reading from the N-terminus, the 469-residue chain is Ribulose bisphosphate carboxylase large chain (469 aa).

A propeptide spanning residues M1–S2 is cleaved from the precursor. P3 is modified (N-acetylproline). K14 carries the post-translational modification N6,N6,N6-trimethyllysine. N123 and T173 together coordinate substrate. Residue K175 is the Proton acceptor of the active site. K177 lines the substrate pocket. 3 residues coordinate Mg(2+): K201, D203, and E204. At K201 the chain carries N6-carboxylysine. The active-site Proton acceptor is the H294. The substrate site is built by R295, H327, and S379.

This sequence belongs to the RuBisCO large chain family. Type I subfamily. As to quaternary structure, heterohexadecamer of 8 large chains and 8 small chains; disulfide-linked. The disulfide link is formed within the large subunit homodimers. Mg(2+) is required as a cofactor. The disulfide bond which can form in the large chain dimeric partners within the hexadecamer appears to be associated with oxidative stress and protein turnover.

Its subcellular location is the plastid. It localises to the chloroplast. It carries out the reaction 2 (2R)-3-phosphoglycerate + 2 H(+) = D-ribulose 1,5-bisphosphate + CO2 + H2O. The catalysed reaction is D-ribulose 1,5-bisphosphate + O2 = 2-phosphoglycolate + (2R)-3-phosphoglycerate + 2 H(+). RuBisCO catalyzes two reactions: the carboxylation of D-ribulose 1,5-bisphosphate, the primary event in carbon dioxide fixation, as well as the oxidative fragmentation of the pentose substrate in the photorespiration process. Both reactions occur simultaneously and in competition at the same active site. This is Ribulose bisphosphate carboxylase large chain from Dianthus caryophyllus (Carnation).